A 229-amino-acid chain; its full sequence is Ribonuclease 3 (229 aa).

In terms of domain architecture, RNase III spans 5-127 (LDRLERKLGY…LIGAIYLDTG (123 aa)). E40 provides a ligand contact to Mg(2+). D44 is an active-site residue. 2 residues coordinate Mg(2+): D113 and E116. Residue E116 is part of the active site. Residues 154-224 (DPKTRLQEFL…AAAALVALGV (71 aa)) enclose the DRBM domain.

This sequence belongs to the ribonuclease III family. Homodimer. It depends on Mg(2+) as a cofactor.

The protein localises to the cytoplasm. The enzyme catalyses Endonucleolytic cleavage to 5'-phosphomonoester.. Functionally, digests double-stranded RNA. Involved in the processing of primary rRNA transcript to yield the immediate precursors to the large and small rRNAs (23S and 16S). Processes some mRNAs, and tRNAs when they are encoded in the rRNA operon. Processes pre-crRNA and tracrRNA of type II CRISPR loci if present in the organism. The sequence is that of Ribonuclease 3 from Pseudomonas aeruginosa (strain LESB58).